The chain runs to 89 residues: MSLNAEQKAKVVLEHGSSAHDTGSTEVQVALLTLRINDLQKHFLEHKKDHHSRRGLLRMVSQRRKLLDYLKKRNISKYTDLIQSLGLRK.

The protein belongs to the universal ribosomal protein uS15 family. As to quaternary structure, part of the 30S ribosomal subunit. Forms a bridge to the 50S subunit in the 70S ribosome, contacting the 23S rRNA.

Functionally, one of the primary rRNA binding proteins, it binds directly to 16S rRNA where it helps nucleate assembly of the platform of the 30S subunit by binding and bridging several RNA helices of the 16S rRNA. In terms of biological role, forms an intersubunit bridge (bridge B4) with the 23S rRNA of the 50S subunit in the ribosome. The polypeptide is Small ribosomal subunit protein uS15 (Hamiltonella defensa subsp. Acyrthosiphon pisum (strain 5AT)).